Reading from the N-terminus, the 545-residue chain is Hydroxylamine reductase (545 aa).

[4Fe-4S] cluster-binding residues include Cys-3, Cys-6, Cys-15, and Cys-21. 8 residues coordinate hybrid [4Fe-2O-2S] cluster: His-240, Glu-264, Cys-309, Cys-401, Cys-429, Cys-454, Glu-488, and Lys-490. Cysteine persulfide is present on Cys-401.

Belongs to the HCP family. The cofactor is [4Fe-4S] cluster. Hybrid [4Fe-2O-2S] cluster is required as a cofactor.

The protein localises to the cytoplasm. It carries out the reaction A + NH4(+) + H2O = hydroxylamine + AH2 + H(+). Functionally, catalyzes the reduction of hydroxylamine to form NH(3) and H(2)O. The sequence is that of Hydroxylamine reductase from Rippkaea orientalis (strain PCC 8801 / RF-1) (Cyanothece sp. (strain PCC 8801)).